The sequence spans 512 residues: Sugar transport protein MST7 (512 aa).

Residues Met-1–Lys-17 lie on the Cytoplasmic side of the membrane. Residues Met-18–Tyr-38 form a helical membrane-spanning segment. Over Asp-39–Leu-81 the chain is Extracellular. The helical transmembrane segment at Thr-82–Ile-102 threads the bilayer. Residues Thr-103–Gly-116 are Cytoplasmic-facing. Residues Phe-117–Ile-137 form a helical membrane-spanning segment. The Extracellular segment spans residues Gly-138–Arg-139. A helical membrane pass occupies residues Ile-140–Met-160. At Ala-161–Arg-166 the chain is on the cytoplasmic side. The helical transmembrane segment at Gly-167–Ile-187 threads the bilayer. Residues Asn-188–Arg-201 lie on the Extracellular side of the membrane. Residues Val-202–Pro-222 form a helical membrane-spanning segment. The Cytoplasmic segment spans residues Asp-223 to Gln-294. Residues Leu-295–Gly-315 traverse the membrane as a helical segment. The Extracellular portion of the chain corresponds to Gly-316 to Leu-320. A helical membrane pass occupies residues Met-321 to Val-341. Over Asp-342–Arg-347 the chain is Cytoplasmic. A helical membrane pass occupies residues Val-348–Ile-368. At Ala-369–Ala-385 the chain is on the extracellular side. A helical transmembrane segment spans residues Ile-386–Leu-406. Over Gly-407–Ser-425 the chain is Cytoplasmic. A helical membrane pass occupies residues Val-426–Leu-446. Topologically, residues Cys-447 to Lys-450 are extracellular. Residues Phe-451–Phe-471 traverse the membrane as a helical segment. Residues Leu-472–Val-512 are Cytoplasmic-facing.

The protein belongs to the major facilitator superfamily. Sugar transporter (TC 2.A.1.1) family.

It is found in the membrane. Its function is as follows. Mediates active uptake of hexoses by sugar:proton symport. This is Sugar transport protein MST7 from Oryza sativa subsp. japonica (Rice).